The primary structure comprises 493 residues: Telomere-binding protein subunit alpha (493 aa).

The interval 1–30 (MSSAKRSTSRVSKKKAAPAKDGAPKKREQS) is disordered. Residues 7-17 (STSRVSKKKAA) are compositionally biased toward basic residues.

Belongs to the telombin family. As to quaternary structure, heterodimer of an alpha and a beta subunit.

The protein resides in the nucleus. The protein localises to the chromosome. It is found in the telomere. In terms of biological role, may function as protective capping of the single-stranded telomeric overhang. May also participate in telomere length regulation during DNA replication. This is Telomere-binding protein subunit alpha (STY56V) from Stylonychia mytilus (Ciliate).